Consider the following 93-residue polypeptide: Corticostatin 1 (93 aa).

Residues 1 to 19 (MRTLILLAAILLAALQAQA) form the signal peptide. The propeptide occupies 20–59 (ELFSVNVDEVLDQQQPGSDQDLVIHLTGEESSALQVPDTK). 3 cysteine pairs are disulfide-bonded: cysteine 62–cysteine 90, cysteine 64–cysteine 79, and cysteine 69–cysteine 89.

This sequence belongs to the alpha-defensin family.

It is found in the secreted. Its function is as follows. Microbicidal activity and inhibits corticotropin (ACTH) stimulated corticosterone production. This chain is Corticostatin 1, found in Oryctolagus cuniculus (Rabbit).